The sequence spans 143 residues: Small ribosomal subunit protein uS9 (143 aa).

The disordered stretch occupies residues 124–143 (PEPKKFGGKGARARFQKSYR). Residues 134-143 (ARARFQKSYR) show a composition bias toward basic residues.

Belongs to the universal ribosomal protein uS9 family.

This Candida glabrata (strain ATCC 2001 / BCRC 20586 / JCM 3761 / NBRC 0622 / NRRL Y-65 / CBS 138) (Yeast) protein is Small ribosomal subunit protein uS9 (RPS16).